The chain runs to 545 residues: Sensory neuron membrane protein 1 (545 aa).

Over 1–10 (MELKERNFKK) the chain is Cytoplasmic. The helical transmembrane segment at 11-31 (IGLICVAVLLCGMVFSYGIFP) threads the bilayer. Residues 32 to 464 (SILRFMIKQN…LFLGLKFNAT (433 aa)) are Extracellular-facing. Residues Asn69, Asn214, and Asn227 are each glycosylated (N-linked (GlcNAc...) asparagine). 3 disulfide bridges follow: Cys266–Cys331, Cys295–Cys351, and Cys333–Cys340. Asn444 and Asn462 each carry an N-linked (GlcNAc...) asparagine glycan. Residues 465–485 (VKWLTIIIGTVGAVGSAYMYF) form a helical membrane-spanning segment. Residues 486–545 (RKETKTTDVAPVDVSTPDTNPSSAKDGVVNVSLGRNLPPVIDGLDKPPKLRATELQQERY) are Cytoplasmic-facing.

It belongs to the CD36 family. In terms of tissue distribution, selectively expressed in antenna.

The protein resides in the cell membrane. Plays an olfactory role that is not restricted to pheromone sensitivity. The polypeptide is Sensory neuron membrane protein 1 (snmp1) (Anopheles gambiae (African malaria mosquito)).